The primary structure comprises 1375 residues: DNA-directed RNA polymerase subunit beta (1375 aa).

It belongs to the RNA polymerase beta chain family. The RNAP catalytic core consists of 2 alpha, 1 beta, 1 beta' and 1 omega subunit. When a sigma factor is associated with the core the holoenzyme is formed, which can initiate transcription.

The catalysed reaction is RNA(n) + a ribonucleoside 5'-triphosphate = RNA(n+1) + diphosphate. Functionally, DNA-dependent RNA polymerase catalyzes the transcription of DNA into RNA using the four ribonucleoside triphosphates as substrates. This Campylobacter jejuni subsp. jejuni serotype O:6 (strain 81116 / NCTC 11828) protein is DNA-directed RNA polymerase subunit beta.